Here is a 219-residue protein sequence, read N- to C-terminus: Large ribosomal subunit protein uL3 (219 aa).

A disordered region spans residues 133–153 (GRASHGNSRSHNVPGSIGMAQ). Glutamine 153 is subject to N5-methylglutamine.

The protein belongs to the universal ribosomal protein uL3 family. As to quaternary structure, part of the 50S ribosomal subunit. Forms a cluster with proteins L14 and L19. Post-translationally, methylated by PrmB.

In terms of biological role, one of the primary rRNA binding proteins, it binds directly near the 3'-end of the 23S rRNA, where it nucleates assembly of the 50S subunit. The polypeptide is Large ribosomal subunit protein uL3 (Burkholderia thailandensis (strain ATCC 700388 / DSM 13276 / CCUG 48851 / CIP 106301 / E264)).